The primary structure comprises 369 residues: sn-glycerol-3-phosphate import ATP-binding protein UgpC (369 aa).

Residues 4 to 235 (LSLRNVQKTY…PASTFVAGFI (232 aa)) enclose the ABC transporter domain. ATP is bound at residue 37 to 44 (GPSGCGKS).

Belongs to the ABC transporter superfamily. sn-glycerol-3-phosphate importer (TC 3.A.1.1.3) family. In terms of assembly, the complex is composed of two ATP-binding proteins (UgpC), two transmembrane proteins (UgpA and UgpE) and a solute-binding protein (UgpB).

It is found in the cell inner membrane. It catalyses the reaction sn-glycerol 3-phosphate(out) + ATP + H2O = sn-glycerol 3-phosphate(in) + ADP + phosphate + H(+). Its function is as follows. Part of the ABC transporter complex UgpBAEC involved in sn-glycerol-3-phosphate (G3P) import. Responsible for energy coupling to the transport system. The polypeptide is sn-glycerol-3-phosphate import ATP-binding protein UgpC (Cupriavidus pinatubonensis (strain JMP 134 / LMG 1197) (Cupriavidus necator (strain JMP 134))).